The following is a 607-amino-acid chain: Albumin (607 aa).

Positions 1–18 (MKWVTFVSLLFLFSSAYF) are cleaved as a signal peptide. Positions 19–24 (RGVLRR) are excised as a propeptide. Albumin domains follow at residues 19 to 209 (RGVL…DALK), 210 to 402 (ERIL…QFTP), and 403 to 600 (LVEE…KLVA). Residue His27 participates in Cu cation binding. Ser29 is modified (phosphoserine). The Ca(2+) site is built by Glu30 and Asp37. Cysteines 77 and 86 form a disulfide. A phosphoserine mark is found at Ser82 and Ser89. His91 provides a ligand contact to Zn(2+). 6 disulfide bridges follow: Cys99-Cys115, Cys114-Cys125, Cys147-Cys192, Cys191-Cys200, Cys223-Cys269, and Cys268-Cys276. Thr107 is subject to Phosphothreonine. Lys228 is subject to N6-succinyllysine. Residue Glu267 participates in Ca(2+) binding. Residues His270 and Asp272 each contribute to the Zn(2+) site. Positions 272, 275, 278, and 282 each coordinate Ca(2+). 8 disulfide bridges follow: Cys288–Cys302, Cys301–Cys312, Cys339–Cys384, Cys383–Cys392, Cys415–Cys461, Cys460–Cys471, Cys484–Cys500, and Cys499–Cys510. The residue at position 442 (Ser442) is a Phosphoserine. 2 positions are modified to phosphothreonine: Thr443 and Thr445. Ser512 carries the phosphoserine modification. 2 cysteine pairs are disulfide-bonded: Cys537–Cys582 and Cys581–Cys590. Lys557 bears the N6-methyllysine mark. Thr569 is subject to Phosphothreonine. The residue at position 587 (Lys587) is an N6-succinyllysine.

It belongs to the ALB/AFP/VDB family. In terms of assembly, interacts with FCGRT; this interaction regulates ALB homeostasis. Interacts with TASOR. In plasma, occurs in a covalently-linked complex with chromophore-bound alpha-1-microglobulin; this interaction does not prevent fatty acid binding to ALB. In terms of processing, phosphorylated by FAM20C in the extracellular medium. As to expression, plasma.

It is found in the secreted. Its function is as follows. Binds water, Ca(2+), Na(+), K(+), fatty acids, hormones, bilirubin and drugs. Its main function is the regulation of the colloidal osmotic pressure of blood. Major zinc transporter in plasma, typically binds about 80% of all plasma zinc. Major calcium and magnesium transporter in plasma, binds approximately 45% of circulating calcium and magnesium in plasma. Potentially has more than two calcium-binding sites and might additionally bind calcium in a non-specific manner. The shared binding site between zinc and calcium at residue Asp-272 suggests a crosstalk between zinc and calcium transport in the blood. The rank order of affinity is zinc &gt; calcium &gt; magnesium. Binds to the bacterial siderophore enterobactin and inhibits enterobactin-mediated iron uptake of E.coli from ferric transferrin, and may thereby limit the utilization of iron and growth of enteric bacteria such as E.coli. Does not prevent iron uptake by the bacterial siderophore aerobactin. The chain is Albumin (ALB) from Equus asinus (Donkey).